A 274-amino-acid polypeptide reads, in one-letter code: Putative pyruvate, phosphate dikinase regulatory protein (274 aa).

Residue 151–158 participates in ADP binding; that stretch reads GVSRTSKT.

It belongs to the pyruvate, phosphate/water dikinase regulatory protein family. PDRP subfamily.

The enzyme catalyses N(tele)-phospho-L-histidyl/L-threonyl-[pyruvate, phosphate dikinase] + ADP = N(tele)-phospho-L-histidyl/O-phospho-L-threonyl-[pyruvate, phosphate dikinase] + AMP + H(+). It catalyses the reaction N(tele)-phospho-L-histidyl/O-phospho-L-threonyl-[pyruvate, phosphate dikinase] + phosphate + H(+) = N(tele)-phospho-L-histidyl/L-threonyl-[pyruvate, phosphate dikinase] + diphosphate. Bifunctional serine/threonine kinase and phosphorylase involved in the regulation of the pyruvate, phosphate dikinase (PPDK) by catalyzing its phosphorylation/dephosphorylation. In Pelagibacter ubique (strain HTCC1062), this protein is Putative pyruvate, phosphate dikinase regulatory protein.